The following is a 630-amino-acid chain: tRNA uridine 5-carboxymethylaminomethyl modification enzyme MnmG (630 aa).

Residue 13–18 (GGGHAG) participates in FAD binding. 273 to 287 (GPRYCPSIEDKIHRF) contacts NAD(+).

The protein belongs to the MnmG family. As to quaternary structure, homodimer. Heterotetramer of two MnmE and two MnmG subunits. It depends on FAD as a cofactor.

It localises to the cytoplasm. Its function is as follows. NAD-binding protein involved in the addition of a carboxymethylaminomethyl (cmnm) group at the wobble position (U34) of certain tRNAs, forming tRNA-cmnm(5)s(2)U34. This is tRNA uridine 5-carboxymethylaminomethyl modification enzyme MnmG from Pseudomonas putida (strain W619).